The chain runs to 205 residues: Ribosomal RNA small subunit methyltransferase G (205 aa).

Residues Gly76, Leu81, Ile127–Glu128, and Arg140 contribute to the S-adenosyl-L-methionine site.

The protein belongs to the methyltransferase superfamily. RNA methyltransferase RsmG family.

The protein localises to the cytoplasm. It carries out the reaction guanosine(527) in 16S rRNA + S-adenosyl-L-methionine = N(7)-methylguanosine(527) in 16S rRNA + S-adenosyl-L-homocysteine. Functionally, specifically methylates the N7 position of guanine in position 527 of 16S rRNA. This chain is Ribosomal RNA small subunit methyltransferase G, found in Francisella tularensis subsp. novicida (strain U112).